Consider the following 341-residue polypeptide: 4-hydroxy-2-oxovalerate aldolase (341 aa).

In terms of domain architecture, Pyruvate carboxyltransferase spans 9 to 260 (VVITDSTLRD…ATGIDLYRVL (252 aa)). 17–18 (RD) contributes to the substrate binding site. Residue Asp-18 participates in Mn(2+) binding. His-21 functions as the Proton acceptor in the catalytic mechanism. Substrate-binding residues include Ser-172 and His-199. Mn(2+)-binding residues include His-199 and His-201.

It belongs to the 4-hydroxy-2-oxovalerate aldolase family.

The catalysed reaction is (S)-4-hydroxy-2-oxopentanoate = acetaldehyde + pyruvate. The sequence is that of 4-hydroxy-2-oxovalerate aldolase from Spirochaeta aurantia.